We begin with the raw amino-acid sequence, 704 residues long: Polyribonucleotide nucleotidyltransferase (704 aa).

The Mg(2+) site is built by aspartate 487 and aspartate 493. The 60-residue stretch at 554–613 folds into the KH domain; the sequence is PRLLTIKIHPDKIREVIGKGGSTIQAITKETGTQIDIQDDGTIIIASVNAIAAQAAKSRI. Positions 623 to 691 constitute an S1 motif domain; sequence GRIYEGKVAK…KQGRIRLSIK (69 aa).

The protein belongs to the polyribonucleotide nucleotidyltransferase family. In terms of assembly, component of the RNA degradosome, which is a multiprotein complex involved in RNA processing and mRNA degradation. Mg(2+) serves as cofactor.

The protein resides in the cytoplasm. It carries out the reaction RNA(n+1) + phosphate = RNA(n) + a ribonucleoside 5'-diphosphate. In terms of biological role, involved in mRNA degradation. Catalyzes the phosphorolysis of single-stranded polyribonucleotides processively in the 3'- to 5'-direction. This Xanthomonas euvesicatoria pv. vesicatoria (strain 85-10) (Xanthomonas campestris pv. vesicatoria) protein is Polyribonucleotide nucleotidyltransferase.